The sequence spans 208 residues: Large ribosomal subunit protein uL3 (208 aa).

The segment at 134–159 is disordered; sequence SKFHREAGSTGHCTTPGRSFKNTTMP. The segment covering 144 to 158 has biased composition (polar residues); that stretch reads GHCTTPGRSFKNTTM.

The protein belongs to the universal ribosomal protein uL3 family. As to quaternary structure, part of the 50S ribosomal subunit. Forms a cluster with proteins L14 and L19.

In terms of biological role, one of the primary rRNA binding proteins, it binds directly near the 3'-end of the 23S rRNA, where it nucleates assembly of the 50S subunit. This Treponema denticola (strain ATCC 35405 / DSM 14222 / CIP 103919 / JCM 8153 / KCTC 15104) protein is Large ribosomal subunit protein uL3.